We begin with the raw amino-acid sequence, 500 residues long: Probable malate:quinone oxidoreductase (500 aa).

Belongs to the MQO family. Requires FAD as cofactor.

It carries out the reaction (S)-malate + a quinone = a quinol + oxaloacetate. The protein operates within carbohydrate metabolism; tricarboxylic acid cycle; oxaloacetate from (S)-malate (quinone route): step 1/1. The protein is Probable malate:quinone oxidoreductase of Bacillus mycoides (strain KBAB4) (Bacillus weihenstephanensis).